The following is a 271-amino-acid chain: ATP synthase subunit a (271 aa).

A run of 5 helical transmembrane segments spans residues 47–67, 107–127, 133–153, 209–229, and 235–255; these read WENIIFAILVASLISLVAYLG, FLGTLFIYIFTMNIFGMVPLM, SLNITAALAICVFCLVQFLNI, ILIGTFALMGVVMISSVETFV, and LPFMFLGLLTSFMQALVFTLL.

It belongs to the ATPase A chain family. In terms of assembly, F-type ATPases have 2 components, CF(1) - the catalytic core - and CF(0) - the membrane proton channel. CF(1) has five subunits: alpha(3), beta(3), gamma(1), delta(1), epsilon(1). CF(0) has three main subunits: a(1), b(2) and c(9-12). The alpha and beta chains form an alternating ring which encloses part of the gamma chain. CF(1) is attached to CF(0) by a central stalk formed by the gamma and epsilon chains, while a peripheral stalk is formed by the delta and b chains.

Its subcellular location is the cell inner membrane. Its function is as follows. Key component of the proton channel; it plays a direct role in the translocation of protons across the membrane. The chain is ATP synthase subunit a from Protochlamydia amoebophila (strain UWE25).